Consider the following 150-residue polypeptide: Single-stranded DNA-binding protein 1 (150 aa).

The SSB domain maps to 1–104 (MINNVVLVGR…VVADTFQMLE (104 aa)). The segment covering 103 to 120 (LESNKTQGQQTSKPQAQN) has biased composition (polar residues). A disordered region spans residues 103 to 150 (LESNKTQGQQTSKPQAQNKKPQAPDPFKAPAADPFAGGTEISDDDLPF). Residues 121 to 138 (KKPQAPDPFKAPAADPFA) show a composition bias toward low complexity. The Important for interaction with partner proteins signature appears at 145–150 (DDDLPF).

In terms of assembly, homotetramer.

Its function is as follows. Plays an important role in DNA replication, recombination and repair. Binds to ssDNA and to an array of partner proteins to recruit them to their sites of action during DNA metabolism. In Lactococcus lactis subsp. lactis (strain IL1403) (Streptococcus lactis), this protein is Single-stranded DNA-binding protein 1 (ssb1).